Consider the following 227-residue polypeptide: Endo-1,4-beta-xylanase 1 (227 aa).

Residues 1–19 form the signal peptide; it reads MVSLKSVLAAATAVSSAIA. A GH11 domain is found at 37 to 225; sequence QVTPNAEGWH…SSGESDIYVQ (189 aa). Catalysis depends on Glu-121, which acts as the Nucleophile. Glu-212 functions as the Proton donor in the catalytic mechanism.

The protein belongs to the glycosyl hydrolase 11 (cellulase G) family.

The enzyme catalyses Endohydrolysis of (1-&gt;4)-beta-D-xylosidic linkages in xylans.. The protein operates within glycan degradation; xylan degradation. The sequence is that of Endo-1,4-beta-xylanase 1 from Humicola insolens (Soft-rot fungus).